The sequence spans 594 residues: Golgi-associated RAB2 interactor protein 4 (594 aa).

Residues 387–524 form a disordered region; that stretch reads MDAAAGPPVS…TSSGSSKGLG (138 aa). Over residues 396 to 406 the composition is skewed to polar residues; sequence STRQSKSSLSG. Composition is skewed to basic and acidic residues over residues 408 to 433, 442 to 455, and 468 to 477; these read HGRERTQASAEGCKEGRERREKDRAL, TGESRHKTRGDKIA, and ANRDDKKEKG. Residues 511 to 520 are compositionally biased toward polar residues; it reads SLWTTSSGSS.

This sequence belongs to the GARIN family. Interacts (via N-terminus) with RAB2B (in GTP-bound form).

It localises to the golgi apparatus. In terms of biological role, RAB2B effector protein required for the compacted Golgi morphology, probably through interaction with small GTPase RAB2B. In Homo sapiens (Human), this protein is Golgi-associated RAB2 interactor protein 4.